A 236-amino-acid chain; its full sequence is Cysteine-rich venom protein TRI1 (236 aa).

Residues 1–18 (MIVFILLSLAAVLEQSFG) form the signal peptide. The SCP domain occupies 37-165 (VDRHNSFRRS…GYSYFYVCQY (129 aa)). Intrachain disulfides connect Cys74–Cys152, Cys91–Cys166, Cys147–Cys163, Cys185–Cys192, Cys188–Cys197, Cys201–Cys234, Cys210–Cys228, and Cys219–Cys232. Residues 201–234 (CLREDKFTNCKSLVQQNSCQHDWTRKNCPATCFC) form the ShKT domain.

The protein belongs to the CRISP family. Expressed by the venom gland.

The protein localises to the secreted. Blocks contraction of smooth muscle elicited by high potassium-induced depolarization, but does not block caffeine-stimulated contraction. May target voltage-gated calcium channels on smooth muscle. This chain is Cysteine-rich venom protein TRI1, found in Trimorphodon biscutatus (Western lyre snake).